Consider the following 327-residue polypeptide: Endo-1,4-beta-xylanase C (327 aa).

Residues 1 to 15 (MKFSSLLFTASLVAA) form the signal peptide. A GH10 domain is found at 43-325 (TITDPNLLQS…KPAYTAVVNA (283 aa)). Catalysis depends on Glu154, which acts as the Proton donor. The Nucleophile role is filled by Glu262. Cys280 and Cys286 are disulfide-bonded.

It belongs to the glycosyl hydrolase 10 (cellulase F) family.

It localises to the secreted. The catalysed reaction is Endohydrolysis of (1-&gt;4)-beta-D-xylosidic linkages in xylans.. Its pathway is glycan degradation; xylan degradation. With respect to regulation, weakly inhibited by the wheat xylanase inhibiting protein I (XIP-I). Functionally, endo-1,4-beta-xylanase involved in the hydrolysis of xylan, a major structural heterogeneous polysaccharide found in plant biomass representing the second most abundant polysaccharide in the biosphere, after cellulose. Plays an important role in causing fusarium head blight (FHB) on cereal crops. This Gibberella zeae (strain ATCC MYA-4620 / CBS 123657 / FGSC 9075 / NRRL 31084 / PH-1) (Wheat head blight fungus) protein is Endo-1,4-beta-xylanase C (XYLC).